Reading from the N-terminus, the 191-residue chain is A-type ATP synthase subunit E (191 aa).

This sequence belongs to the V-ATPase E subunit family. In terms of assembly, has multiple subunits with at least A(3), B(3), C, D, E, F, H, I and proteolipid K(x).

It localises to the cell membrane. Functionally, component of the A-type ATP synthase that produces ATP from ADP in the presence of a proton gradient across the membrane. The chain is A-type ATP synthase subunit E from Methanoregula boonei (strain DSM 21154 / JCM 14090 / 6A8).